A 541-amino-acid chain; its full sequence is Putative nucleobase-ascorbate transporter 10 (541 aa).

12 consecutive transmembrane segments (helical) span residues 52 to 72, 79 to 99, 101 to 121, 141 to 161, 173 to 193, 196 to 216, 235 to 255, 299 to 319, 376 to 396, 397 to 417, 433 to 453, and 476 to 496; these read LLSL…MGGG, VIQT…FFGT, LPVI…IIYS, IQGA…LGVW, IAPL…PLLA, VEVG…LPRF, GMIL…SSGV, SFAM…LFYA, RVIQ…KFGA, FFAS…LCFV, FNIK…PQYF, and VIFM…DCTL.

Belongs to the nucleobase:cation symporter-2 (NCS2) (TC 2.A.40) family.

It localises to the membrane. The protein is Putative nucleobase-ascorbate transporter 10 (NAT10) of Arabidopsis thaliana (Mouse-ear cress).